The sequence spans 376 residues: Succinyl-diaminopimelate desuccinylase (376 aa).

Position 66 (histidine 66) interacts with Zn(2+). Aspartate 68 is a catalytic residue. Aspartate 99 is a binding site for Zn(2+). Glutamate 133 acts as the Proton acceptor in catalysis. Positions 134, 162, and 348 each coordinate Zn(2+).

It belongs to the peptidase M20A family. DapE subfamily. Homodimer. It depends on Zn(2+) as a cofactor. Co(2+) is required as a cofactor.

The enzyme catalyses N-succinyl-(2S,6S)-2,6-diaminopimelate + H2O = (2S,6S)-2,6-diaminopimelate + succinate. It participates in amino-acid biosynthesis; L-lysine biosynthesis via DAP pathway; LL-2,6-diaminopimelate from (S)-tetrahydrodipicolinate (succinylase route): step 3/3. Functionally, catalyzes the hydrolysis of N-succinyl-L,L-diaminopimelic acid (SDAP), forming succinate and LL-2,6-diaminopimelate (DAP), an intermediate involved in the bacterial biosynthesis of lysine and meso-diaminopimelic acid, an essential component of bacterial cell walls. In Thioalkalivibrio sulfidiphilus (strain HL-EbGR7), this protein is Succinyl-diaminopimelate desuccinylase.